A 418-amino-acid polypeptide reads, in one-letter code: Cyclin-A1 (418 aa).

This sequence belongs to the cyclin family. Cyclin AB subfamily. In terms of assembly, interacts with the CDK1 and the CDK2 protein kinases to form a serine/threonine kinase holoenzyme complex. The cyclin subunit imparts substrate specificity to the complex.

It is found in the nucleus. In terms of biological role, may be involved in the control of the cell cycle at the G1/S (start) and G2/M (mitosis) transitions. The protein is Cyclin-A1 (ccna1) of Xenopus laevis (African clawed frog).